Reading from the N-terminus, the 330-residue chain is tRNA N6-adenosine threonylcarbamoyltransferase (330 aa).

Fe cation-binding residues include His110 and His114. Substrate is bound by residues 133–137, Asp166, Gly179, Asp183, and Asn271; that span reads MVSGG. Asp299 lines the Fe cation pocket.

The protein belongs to the KAE1 / TsaD family. Requires Fe(2+) as cofactor.

It localises to the cytoplasm. The catalysed reaction is L-threonylcarbamoyladenylate + adenosine(37) in tRNA = N(6)-L-threonylcarbamoyladenosine(37) in tRNA + AMP + H(+). Its function is as follows. Required for the formation of a threonylcarbamoyl group on adenosine at position 37 (t(6)A37) in tRNAs that read codons beginning with adenine. Is involved in the transfer of the threonylcarbamoyl moiety of threonylcarbamoyl-AMP (TC-AMP) to the N6 group of A37, together with TsaE and TsaB. TsaD likely plays a direct catalytic role in this reaction. The sequence is that of tRNA N6-adenosine threonylcarbamoyltransferase from Thermosipho africanus (strain TCF52B).